Here is a 741-residue protein sequence, read N- to C-terminus: NAD(P)H-quinone oxidoreductase subunit 5, chloroplastic (741 aa).

Helical transmembrane passes span Trp-9–Phe-29, Trp-40–Ile-60, Ile-89–Ile-109, Phe-125–Ile-145, Ile-147–Thr-167, Gly-185–Phe-205, Asn-219–Ala-239, Thr-258–Ala-278, His-289–Ala-311, Leu-327–Ile-347, Ala-354–Cys-374, Asn-396–Ser-416, Trp-425–Tyr-445, Leu-549–Leu-569, Leu-605–Val-625, and Tyr-721–Leu-741.

This sequence belongs to the complex I subunit 5 family. NDH is composed of at least 16 different subunits, 5 of which are encoded in the nucleus.

It is found in the plastid. The protein resides in the chloroplast thylakoid membrane. The catalysed reaction is a plastoquinone + NADH + (n+1) H(+)(in) = a plastoquinol + NAD(+) + n H(+)(out). It carries out the reaction a plastoquinone + NADPH + (n+1) H(+)(in) = a plastoquinol + NADP(+) + n H(+)(out). In terms of biological role, NDH shuttles electrons from NAD(P)H:plastoquinone, via FMN and iron-sulfur (Fe-S) centers, to quinones in the photosynthetic chain and possibly in a chloroplast respiratory chain. The immediate electron acceptor for the enzyme in this species is believed to be plastoquinone. Couples the redox reaction to proton translocation, and thus conserves the redox energy in a proton gradient. The protein is NAD(P)H-quinone oxidoreductase subunit 5, chloroplastic (ndhF) of Symphyotrichum cordifolium (Heart-leaved aster).